Here is a 110-residue protein sequence, read N- to C-terminus: Large ribosomal subunit protein P1B (110 aa).

Low complexity predominate over residues 69–85 (PAAGGAGAPAAAAGGEA). The tract at residues 69–110 (PAAGGAGAPAAAAGGEAAAEEQKEEAKEEEESDEDMGFGLFD) is disordered. Positions 95–104 (KEEEESDEDM) are enriched in acidic residues.

Belongs to the eukaryotic ribosomal protein P1/P2 family. In terms of assembly, component of the large ribosomal subunit (LSU). Mature yeast ribosomes consist of a small (40S) and a large (60S) subunit. The 40S small subunit contains 1 molecule of ribosomal RNA (18S rRNA) and at least 33 different proteins. The large 60S subunit contains 3 rRNA molecules (25S, 5.8S and 5S rRNA) and at least 46 different proteins. The acidic ribosomal P-proteins form the stalk structure of the 60S subunit. They are organized as a pentameric complex in which uL10/P0 interacts with 2 heterodimers of P1 and P2 proteins.

The protein localises to the cytoplasm. Component of the ribosome, a large ribonucleoprotein complex responsible for the synthesis of proteins in the cell. The small ribosomal subunit (SSU) binds messenger RNAs (mRNAs) and translates the encoded message by selecting cognate aminoacyl-transfer RNA (tRNA) molecules. The large subunit (LSU) contains the ribosomal catalytic site termed the peptidyl transferase center (PTC), which catalyzes the formation of peptide bonds, thereby polymerizing the amino acids delivered by tRNAs into a polypeptide chain. The nascent polypeptides leave the ribosome through a tunnel in the LSU and interact with protein factors that function in enzymatic processing, targeting, and the membrane insertion of nascent chains at the exit of the ribosomal tunnel. The sequence is that of Large ribosomal subunit protein P1B (rpp102) from Schizosaccharomyces pombe (strain 972 / ATCC 24843) (Fission yeast).